Here is a 350-residue protein sequence, read N- to C-terminus: MVSSDAYVEGLAAKLALDLLRVYTPTGSEERLYPVLERWASELGLGFSLDSAGNAVLSAGPDGLPVVGLVGHLDTVPGRLEARLEGYTLWGRGAVDAKGPLAAMILGLHLASSEGLSCSSAVLGLVGEEGDSPGAWSLVSRGDTPLHIIVGEPTGGDGVAIGYRGSLTIEIECTGHEGHSSNPERGAADMLVKALASILERDSRATVTRLKAGTAANITPGRALATVNMRFNEPGLEALQLASELCSSLHQHRCHCSSISLLHPVKTSLSNATARALVASLRTAGVKPRIVVKRGTSDMNVLSIATESIAAYGPGDPRLSHTKHENIRVGDIVKAAMIYSRTLTILCNSL.

H72 lines the Zn(2+) pocket. The active site involves D74. A Zn(2+)-binding site is contributed by D96. The active-site Proton acceptor is the E128. Positions 129, 152, and 321 each coordinate Zn(2+).

Belongs to the peptidase M20A family. LysK subfamily. The cofactor is Zn(2+). Requires Co(2+) as cofactor.

The protein localises to the cytoplasm. It catalyses the reaction [amino-group carrier protein]-C-terminal-gamma-(L-lysyl)-L-glutamate + H2O = [amino-group carrier protein]-C-terminal-L-glutamate + L-lysine. It carries out the reaction [amino-group carrier protein]-C-terminal-gamma-(L-ornithyl)-L-glutamate + H2O = [amino-group carrier protein]-C-terminal-L-glutamate + L-ornithine. The protein operates within amino-acid biosynthesis; L-lysine biosynthesis via AAA pathway; L-lysine from L-alpha-aminoadipate (Thermus route): step 5/5. Its pathway is amino-acid biosynthesis; L-arginine biosynthesis. In terms of biological role, catalyzes the release of L-lysine from [LysW]-gamma-L-lysine and the release of L-ornithine from [LysW]-L-ornithine. The chain is Putative [LysW]-lysine/[LysW]-ornithine hydrolase from Aeropyrum pernix (strain ATCC 700893 / DSM 11879 / JCM 9820 / NBRC 100138 / K1).